Consider the following 317-residue polypeptide: MTLDHRLFSQTLKRAQPLAASCMPLAEHGPRSPDSDAGCAGNPFTNPLALGKEDGVVEWRLSGSILDVYSGEQGISPVNTGLMNASCPSILPMKKEIAETDTRALAKERQKKDNHNLIERRRRYNINYRIKELGTLIPKSNDPDIRWNKGTILKASVDYIKWLQKEQQRARELEHRQKKLEHANRQLMLRIQELEIQARAHGLPILASLGTADFGTHITKQQTHSEKNSVGCCQQLTPSQGTSPEFYEQAVAFSDPLSHFTDLSFSAALKEEQRLDGMLLSDTICPFGTDPLLSAISPAVSKASSRSSLSSEDGDEL.

The tract at residues 1–90 is necessary for transcriptional transactivation; that stretch reads MTLDHRLFSQ…GLMNASCPSI (90 aa). Residues 110 to 163 enclose the bHLH domain; the sequence is QKKDNHNLIERRRRYNINYRIKELGTLIPKSNDPDIRWNKGTILKASVDYIKWL. A necessary for transcriptional transactivation region spans residues 242-317; the sequence is TSPEFYEQAV…SLSSEDGDEL (76 aa).

Belongs to the MiT/TFE family. In terms of assembly, homodimer. Forms heterodimers with TFE3. Forms heterodimers with MITF. Interacts with MITF. As to expression, expressed in kidney, spleen, lung, liver, testis and muscle.

Its subcellular location is the nucleus. In terms of biological role, transcriptional regulator that acts as a repressor or an activator. Acts as a transcriptional repressor on minimal promoter containing mu E3 enhancer sequence. Binds to mu E3 DNA sequence of the immunoglobulin heavy-chain gene enhancer. Acts as a transcriptional transactivator on the proximal promoter region of the tartrate-resistant acid phosphatase (TRAP) E-box containing promoter. Collaborates with MITF in target gene activation. Acts as a transcriptional repressor on minimal promoter containing mu E3 enhancer sequence. Binds to mu E3 DNA sequence of the immunoglobulin heavy-chain gene enhancer. Binds DNA in a homo- or heterodimeric form. This is Transcription factor EC (Tfec) from Rattus norvegicus (Rat).